The primary structure comprises 250 residues: Peptidyl-tRNA hydrolase (250 aa).

Tyr-14 is a tRNA binding site. The Proton acceptor role is filled by His-19. TRNA is bound by residues Phe-64, Asn-66, and Asn-112. The tract at residues Met-192–Asp-250 is disordered. Polar residues predominate over residues His-219–Lys-229. Basic and acidic residues predominate over residues Met-241–Asp-250.

Belongs to the PTH family. As to quaternary structure, monomer.

It is found in the cytoplasm. It carries out the reaction an N-acyl-L-alpha-aminoacyl-tRNA + H2O = an N-acyl-L-amino acid + a tRNA + H(+). Hydrolyzes ribosome-free peptidyl-tRNAs (with 1 or more amino acids incorporated), which drop off the ribosome during protein synthesis, or as a result of ribosome stalling. In terms of biological role, catalyzes the release of premature peptidyl moieties from peptidyl-tRNA molecules trapped in stalled 50S ribosomal subunits, and thus maintains levels of free tRNAs and 50S ribosomes. The protein is Peptidyl-tRNA hydrolase of Brucella canis (strain ATCC 23365 / NCTC 10854 / RM-666).